Consider the following 462-residue polypeptide: Probable peptidoglycan glycosyltransferase FtsW (462 aa).

The Cytoplasmic segment spans residues 1–63 (MGCIVCSDGI…VRDGRKFDAP (63 aa)). Residues 64–84 (LLWMVVLMTAFGLLMIYSASV) traverse the membrane as a helical segment. At 85-97 (YLASKEGGDQFFY) the chain is on the periplasmic side. Residues 98–118 (LTRQAGFVVAGLIASGFLWFL) form a helical membrane-spanning segment. Residues 119–125 (CRMRTWR) lie on the Cytoplasmic side of the membrane. Residues 126-146 (RLVPWIFALSGLLLVAVLIAG) form a helical membrane-spanning segment. The Periplasmic portion of the chain corresponds to 147-160 (REINGATRWIPLGP). Residues 161–181 (LNFQPTELFKLAVILYLASLF) traverse the membrane as a helical segment. The Cytoplasmic portion of the chain corresponds to 182-227 (TRREEVLRSMESLGWQSIWRGTANLIMSATNPQARRETLEMYGRFR). 2 consecutive transmembrane segments (helical) span residues 228–248 (AIIL…VQPD) and 249–269 (FGSF…AGLP). Over 270–271 (WK) the chain is Cytoplasmic. The helical transmembrane segment at 272–292 (YFFVLVGSVLGGMVLMITAAP) threads the bilayer. At 293 to 348 (YRVQRVVAFLDPWKDPQGAGYQLTHSLMAIGRGEWFGMGLGASLSKRGFLPEAHTD) the chain is on the periplasmic side. A helical transmembrane segment spans residues 349 to 369 (FIFAIIAEEFGFFGMCVLIFC). Over 370-386 (YGWLVVRAFSIGKQSRD) the chain is Cytoplasmic. A helical transmembrane segment spans residues 387–409 (LGLTFNAYIASGIGIWIGIQSFF). Topologically, residues 410 to 424 (NIGVNIGALPTKGLT) are periplasmic. A helical transmembrane segment spans residues 425 to 445 (LPLMSYGGSSVFFMLISMMLL). Residues 446-462 (LRIDYENRRKMRGYRVE) are Cytoplasmic-facing.

The protein belongs to the SEDS family. FtsW subfamily.

It is found in the cell inner membrane. The catalysed reaction is [GlcNAc-(1-&gt;4)-Mur2Ac(oyl-L-Ala-gamma-D-Glu-L-Lys-D-Ala-D-Ala)](n)-di-trans,octa-cis-undecaprenyl diphosphate + beta-D-GlcNAc-(1-&gt;4)-Mur2Ac(oyl-L-Ala-gamma-D-Glu-L-Lys-D-Ala-D-Ala)-di-trans,octa-cis-undecaprenyl diphosphate = [GlcNAc-(1-&gt;4)-Mur2Ac(oyl-L-Ala-gamma-D-Glu-L-Lys-D-Ala-D-Ala)](n+1)-di-trans,octa-cis-undecaprenyl diphosphate + di-trans,octa-cis-undecaprenyl diphosphate + H(+). The protein operates within cell wall biogenesis; peptidoglycan biosynthesis. In terms of biological role, peptidoglycan polymerase that is essential for cell division. The polypeptide is Probable peptidoglycan glycosyltransferase FtsW (Neisseria gonorrhoeae (strain NCCP11945)).